Consider the following 155-residue polypeptide: Fibroblast growth factor 1 (155 aa).

N-acetylalanine is present on Ala-2. The propeptide occupies 2 to 15 (AEGEITTFAALTER). Asn-33 contacts heparin. Positions 127-143 (KKNGSCKRGPRTHYGQK) are heparin-binding.

It belongs to the heparin-binding growth factors family. As to quaternary structure, monomer. Homodimer. Interacts with FGFR1, FGFR2, FGFR3 and FGFR4. Affinity between fibroblast growth factors (FGFs) and their receptors is increased by heparan sulfate glycosaminoglycans that function as coreceptors. Found in a complex with FGFBP1, FGF1 and FGF2. Interacts with FGFBP1. Part of a Cu(2+)-dependent multiprotein aggregate containing FGF1, S100A13 and SYT1. Interacts with SYT1. Interacts with S100A13. Interacts with LRRC59. Interacts with CSNKA, CSNKB and FIBP. While binding with LRRC59, CSNKA and FIBP seem mutually exclusive, CSNKB and FIBP may cooperatively interact with FGF1. Forms a ternary complex with FGFR1 and ITGAV:ITGB3 and induces the recruitment of PTPN11 to the complex. In terms of processing, in the nucleus, phosphorylated by PKC/PRKCD.

The protein localises to the secreted. Its subcellular location is the cytoplasm. The protein resides in the cell cortex. It is found in the cytosol. It localises to the nucleus. In terms of biological role, plays an important role in the regulation of cell survival, cell division, angiogenesis, cell differentiation and cell migration. Functions as a potent mitogen in vitro. Acts as a ligand for FGFR1 and integrins. Binds to FGFR1 in the presence of heparin leading to FGFR1 dimerization and activation via sequential autophosphorylation on tyrosine residues which act as docking sites for interacting proteins, leading to the activation of several signaling cascades. Binds to integrin ITGAV:ITGB3. Its binding to integrin, subsequent ternary complex formation with integrin and FGFR1, and the recruitment of PTPN11 to the complex are essential for FGF1 signaling. Induces the phosphorylation and activation of FGFR1, FRS2, MAPK3/ERK1, MAPK1/ERK2 and AKT1. Can induce angiogenesis. This chain is Fibroblast growth factor 1 (Fgf1), found in Mus musculus (Mouse).